Here is a 108-residue protein sequence, read N- to C-terminus: Nucleoid-associated protein BAV0915 (108 aa).

Belongs to the YbaB/EbfC family. In terms of assembly, homodimer.

The protein localises to the cytoplasm. Its subcellular location is the nucleoid. Binds to DNA and alters its conformation. May be involved in regulation of gene expression, nucleoid organization and DNA protection. The polypeptide is Nucleoid-associated protein BAV0915 (Bordetella avium (strain 197N)).